The following is a 124-amino-acid chain: UPF0299 membrane protein VP1300 (124 aa).

Transmembrane regions (helical) follow at residues 9 to 29, 35 to 55, 72 to 92, and 95 to 115; these read LIQLLISLFLIMGALGIGITI, VSVPGSVIGMLVLFFSMTLGL, MILLFVPISVGLMQHFDMLLA, and LPIIASAVGGSLIVLVSLAWL.

The protein belongs to the UPF0299 family.

The protein resides in the cell inner membrane. This Vibrio parahaemolyticus serotype O3:K6 (strain RIMD 2210633) protein is UPF0299 membrane protein VP1300.